The sequence spans 362 residues: Probable dual-specificity RNA methyltransferase RlmN (362 aa).

Glutamate 105 serves as the catalytic Proton acceptor. The 234-residue stretch at 111-344 (HEYGNSICVT…VTIRREQGHD (234 aa)) folds into the Radical SAM core domain. Residues cysteine 118 and cysteine 349 are joined by a disulfide bond. [4Fe-4S] cluster-binding residues include cysteine 125, cysteine 129, and cysteine 132. Residues 175–176 (GE), serine 207, 230–232 (SLH), and asparagine 306 each bind S-adenosyl-L-methionine. Cysteine 349 acts as the S-methylcysteine intermediate in catalysis.

It belongs to the radical SAM superfamily. RlmN family. The cofactor is [4Fe-4S] cluster.

The protein resides in the cytoplasm. The catalysed reaction is adenosine(2503) in 23S rRNA + 2 reduced [2Fe-2S]-[ferredoxin] + 2 S-adenosyl-L-methionine = 2-methyladenosine(2503) in 23S rRNA + 5'-deoxyadenosine + L-methionine + 2 oxidized [2Fe-2S]-[ferredoxin] + S-adenosyl-L-homocysteine. It catalyses the reaction adenosine(37) in tRNA + 2 reduced [2Fe-2S]-[ferredoxin] + 2 S-adenosyl-L-methionine = 2-methyladenosine(37) in tRNA + 5'-deoxyadenosine + L-methionine + 2 oxidized [2Fe-2S]-[ferredoxin] + S-adenosyl-L-homocysteine. Specifically methylates position 2 of adenine 2503 in 23S rRNA and position 2 of adenine 37 in tRNAs. This Bacillus anthracis (strain CDC 684 / NRRL 3495) protein is Probable dual-specificity RNA methyltransferase RlmN.